A 707-amino-acid chain; its full sequence is Nucleolin (707 aa).

A disordered region spans residues 1-308; sequence MVKLAKAGKT…KVEGSEPTTP (308 aa). 3 positions are modified to N6-acetyllysine: Lys-9, Lys-15, and Lys-16. Over residues 24–46 the composition is skewed to acidic residues; the sequence is VEEDSEDEEMSEDEDDSSGEEEV. Phosphoserine occurs at positions 28, 34, 40, and 41. The span at 56–92 shows a compositional bias: low complexity; the sequence is ATTTPAKKVVVSQTKKAAVPTPAKKAAVTPGKKAVAT. The stretch at 58–65 is repeat 1; that stretch reads TTPAKKVV. Residues 58 to 135 are 8 X 8 AA tandem repeats of X-T-P-X-K-K-X-X; sequence TTPAKKVVVS…GAATPAKGAK (78 aa). Ser-67 is subject to Phosphoserine. Thr-69, Thr-76, Thr-84, and Thr-92 each carry phosphothreonine. Tandem repeats lie at residues 75–82, 83–90, and 91–98. Residue Lys-96 is modified to N6-acetyllysine. Thr-99 bears the Phosphothreonine mark. The 5; truncated repeat unit spans residues 99-104; that stretch reads TPAKVI. N6-acetyllysine is present on Lys-102. The stretch at 105-112 is repeat 6; sequence PTPGKKGA. Position 106 is a phosphothreonine (Thr-106). N6-acetyllysine is present on residues Lys-109 and Lys-116. 2 tandem repeats follow at residues 120-127 and 128-135. Thr-121 carries the post-translational modification Phosphothreonine. Residues 121–137 are compositionally biased toward low complexity; the sequence is TPGKKGAATPAKGAKNG. Lys-124 is subject to N6-acetyllysine. Phosphoserine occurs at positions 145 and 157. Positions 145–170 are enriched in acidic residues; that stretch reads SDEDEDEEDEDDSDEDEDDEEEDEFE. Residues 179 to 188 show a composition bias toward low complexity; sequence PAKAAPAAPA. A phosphoserine mark is found at Ser-189 and Ser-212. The segment covering 189–217 has biased composition (acidic residues); the sequence is SEDEEDDEDEDDEEDDDEEEEDDSEEEVM. Phosphothreonine is present on Thr-220. Residues 241-273 are compositionally biased toward acidic residues; it reads EEEDDEEEDEDDEDEDDEEEDDEDDDEEEEEEE. Residues 286-302 show a composition bias toward basic and acidic residues; sequence MTKQKEAPEAKKQKVEG. Lys-299 participates in a covalent cross-link: Glycyl lysine isopeptide (Lys-Gly) (interchain with G-Cter in SUMO1); alternate. Lys-299 is covalently cross-linked (Glycyl lysine isopeptide (Lys-Gly) (interchain with G-Cter in SUMO2); alternate). Ser-303 carries the phosphoserine modification. 2 consecutive RRM domains span residues 309–385 and 395–468; these read FNLF…KPKG and RTLL…YTGE. The residue at position 320 (Lys-320) is an N6-acetyllysine. A Glycyl lysine isopeptide (Lys-Gly) (interchain with G-Cter in SUMO1); alternate cross-link involves residue Lys-326. Residue Lys-326 forms a Glycyl lysine isopeptide (Lys-Gly) (interchain with G-Cter in SUMO2); alternate linkage. Lys-350 is modified (N6-acetyllysine). Ser-358 bears the Phosphoserine mark. Residue Thr-369 is modified to Phosphothreonine. Lys-372 participates in a covalent cross-link: Glycyl lysine isopeptide (Lys-Gly) (interchain with G-Cter in SUMO2). A Glycyl lysine isopeptide (Lys-Gly) (interchain with G-Cter in SUMO2); alternate cross-link involves residue Lys-379. An N6-acetyllysine; alternate modification is found at Lys-379. Lys-400 bears the N6-acetyllysine mark. Ser-403 is modified (phosphoserine). Phosphothreonine is present on Thr-407. 2 positions are modified to N6-acetyllysine: Lys-429 and Lys-446. Ser-460 and Ser-462 each carry phosphoserine. Residues Lys-469 and Lys-478 each carry the N6-acetyllysine modification. RRM domains follow at residues 487 to 561 and 569 to 644; these read KTLV…LQGS and KTLF…WAKP. Lys-514 participates in a covalent cross-link: Glycyl lysine isopeptide (Lys-Gly) (interchain with G-Cter in SUMO2); alternate. Lys-514 carries the N6-acetyllysine; alternate modification. Lys-522 and Lys-569 each carry N6-acetyllysine. A Glycyl lysine isopeptide (Lys-Gly) (interchain with G-Cter in SUMO2); alternate cross-link involves residue Lys-574. Lys-574 carries the post-translational modification N6-acetyllysine; alternate. Ser-577 carries the phosphoserine modification. Lys-586 is covalently cross-linked (Glycyl lysine isopeptide (Lys-Gly) (interchain with G-Cter in SUMO1); alternate). Lys-586 participates in a covalent cross-link: Glycyl lysine isopeptide (Lys-Gly) (interchain with G-Cter in SUMO2); alternate. Ser-588 and Ser-616 each carry phosphoserine. Lys-621 participates in a covalent cross-link: Glycyl lysine isopeptide (Lys-Gly) (interchain with G-Cter in SUMO2). Positions 639–707 are disordered; sequence LDWAKPKGEG…KPQGKKTKFE (69 aa). Lys-643 carries the N6-acetyllysine modification. Over residues 647 to 696 the composition is skewed to gly residues; the sequence is EGGFGGRGGGRGGFGGRGGGRGGRGGFGGRGRGGFGGRGGFRGGRGGGGD. 9 positions are modified to asymmetric dimethylarginine: Arg-653, Arg-657, Arg-663, Arg-667, Arg-670, Arg-676, Arg-678, Arg-684, and Arg-688. Arg-691 carries the asymmetric dimethylarginine; alternate modification. Omega-N-methylarginine; alternate is present on Arg-691.

In terms of assembly, identified in a IGF2BP1-dependent mRNP granule complex containing untranslated mRNAs. Component of the SWAP complex that consists of NPM1, NCL/nucleolin, PARP1 and SWAP70. Component of a complex which is at least composed of HTATSF1/Tat-SF1, the P-TEFb complex components CDK9 and CCNT1, RNA polymerase II, SUPT5H, and NCL/nucleolin. Interacts with AICDA. Interacts with APTX. Interacts with C1QBP. Interacts with ERBB4. Interacts (via C-terminus) with FMR1 isoform 6 (via N-terminus). Interacts with GZF1; this interaction is important for nucleolar localization of GZF1. Interacts with NSUN2. Interacts with NVL. Interacts (via N-terminus domain) with SETX. Interacts (via RRM1 and C-terminal RRM4/Arg/Gly-rich domains) with TERT; the interaction is important for nucleolar localization of TERT. Interacts with WDR46. Interacts with ZFP36. Interacts with LRRC34. Interacts with RRP1B. Interacts with HNRNPU; this interaction occurs during mitosis. Interacts with RIOK1; RIOK1 recruits NCL to PRMT5 for symmetrically methylation. Interacts with ZBTB7B. Interacts with MDK; this interaction promotes NCL clustering and lateral movements of this complex into lipid rafts leading to MDK internalization. Interacts with HDGF. Interacts with ALKBH2. Interacts with IGFBP5; this interaction is necessary for IGFBP5 localization to the nucleus. Interacts with DDX24 (when ubiquitinated); this interaction may be important during ribosome biogenesis. Post-translationally, some glutamate residues are glycylated by TTLL8. This modification occurs exclusively on glutamate residues and results in a glycine chain on the gamma-carboxyl group. In terms of processing, symmetrically methylated by PRMT5. As to expression, expressed in B-cells that have been induced to switch to various Ig isotypes.

It is found in the nucleus. The protein localises to the nucleolus. It localises to the cytoplasm. Its function is as follows. Nucleolin is the major nucleolar protein of growing eukaryotic cells. It is found associated with intranucleolar chromatin and pre-ribosomal particles. It induces chromatin decondensation by binding to histone H1. It is thought to play a role in pre-rRNA transcription and ribosome assembly. May play a role in the process of transcriptional elongation. Binds RNA oligonucleotides with 5'-UUAGGG-3' repeats more tightly than the telomeric single-stranded DNA 5'-TTAGGG-3' repeats. The chain is Nucleolin (Ncl) from Mus musculus (Mouse).